The primary structure comprises 622 residues: Low affinity potassium transport system protein Kup (622 aa).

The next 12 membrane-spanning stretches (helical) occupy residues 9-29, 49-69, 101-121, 137-157, 165-185, 212-232, 247-267, 276-296, 337-357, 363-383, 397-417, and 419-439; these read LPAV…TSPL, VFGF…LKYL, VLVI…VITP, PAMD…LFII, VGKL…VLGV, AVSF…EALY, WFTV…ALLL, PFFL…ATLA, IYIP…IVSF, LAAA…ILFC, AWVL…ANVV, and ILSG…IMTT.

It belongs to the HAK/KUP transporter (TC 2.A.72) family.

The protein resides in the cell inner membrane. It catalyses the reaction K(+)(in) + H(+)(in) = K(+)(out) + H(+)(out). Functionally, responsible for the low-affinity transport of potassium into the cell. Likely operates as a K(+):H(+) symporter. The chain is Low affinity potassium transport system protein Kup from Pectobacterium atrosepticum (strain SCRI 1043 / ATCC BAA-672) (Erwinia carotovora subsp. atroseptica).